The primary structure comprises 28 residues: Conotoxin de7b (28 aa).

3 cysteine pairs are disulfide-bonded: Cys-2–Cys-18, Cys-9–Cys-22, and Cys-17–Cys-27. A 4-hydroxyproline; partial modification is found at Pro-4. Glu-7 carries the 4-carboxyglutamate; partial modification. At Pro-14 the chain carries 4-hydroxyproline; partial.

In terms of tissue distribution, expressed by the venom duct.

It is found in the secreted. In terms of biological role, may inhibit sodium (Nav) or calcium channels (Cav). In Conasprella delessertii (Sozon's cone), this protein is Conotoxin de7b.